The primary structure comprises 38 residues: Photosystem II reaction center protein Y (38 aa).

A helical transmembrane segment spans residues 4–22 (TIVVFAPIIAALAWVVFNI).

The protein belongs to the PsbY family. PSII is composed of 1 copy each of membrane proteins PsbA, PsbB, PsbC, PsbD, PsbE, PsbF, PsbH, PsbI, PsbJ, PsbK, PsbL, PsbM, PsbT, PsbX, PsbY, Psb30/Ycf12, peripheral proteins PsbO, CyanoQ (PsbQ), PsbU, PsbV and a large number of cofactors. It forms dimeric complexes.

It localises to the cellular thylakoid membrane. Loosely associated component of the core of photosystem II (PSII), it is not always seen in crystals. PSII is a light-driven water plastoquinone oxidoreductase, using light energy to abstract electrons from H(2)O, generating a proton gradient subsequently used for ATP formation. The polypeptide is Photosystem II reaction center protein Y (Prochlorococcus marinus (strain MIT 9215)).